The sequence spans 219 residues: Urease accessory protein UreG (219 aa).

Positions methionine 1 to glycine 20 are disordered. Glycine 23 to threonine 30 contacts GTP.

Belongs to the SIMIBI class G3E GTPase family. UreG subfamily. As to quaternary structure, homodimer. UreD, UreF and UreG form a complex that acts as a GTP-hydrolysis-dependent molecular chaperone, activating the urease apoprotein by helping to assemble the nickel containing metallocenter of UreC. The UreE protein probably delivers the nickel.

It is found in the cytoplasm. Its function is as follows. Facilitates the functional incorporation of the urease nickel metallocenter. This process requires GTP hydrolysis, probably effectuated by UreG. The protein is Urease accessory protein UreG of Methylibium petroleiphilum (strain ATCC BAA-1232 / LMG 22953 / PM1).